A 128-amino-acid chain; its full sequence is Natriuretic peptides A (128 aa).

A disordered region spans residues 36-84; the sequence is QVASEQNEEAGAVLSALPEVPSWPGEAGPAQREGGALGRGPWDSSDRSA. A propeptide spanning residues 68–78 is cleaved from the precursor; the sequence is EGGALGRGPWD. Serine 104 is modified (phosphoserine). Cysteine 105 and cysteine 121 form a disulfide bridge. The important for degradation of atrial natriuretic peptide by IDE stretch occupies residues 122-126; sequence NSFRY.

The protein belongs to the natriuretic peptide family. In terms of assembly, homodimer; disulfide-linked antiparallel dimer. Post-translationally, the precursor molecule is proteolytically cleaved by CORIN at Arg-98 to produce atrial natriuretic peptide. Undergoes further proteolytic cleavage by unknown proteases to give rise to long-acting natriuretic peptide, vessel dilator and kaliuretic peptide. Additional processing gives rise to the auriculin and atriopeptin peptides. In the kidneys, alternative processing by an unknown protease results in the peptide urodilatin. In terms of processing, cleavage by MME initiates degradation of the factor and thereby regulates its activity. Degraded by IDE (in vitro). During IDE degradation, the resulting products can temporarily stimulate NPR2 to produce cGMP, before the fragments are completely degraded and inactivated by IDE (in vitro). Degraded by IDE. Post-translationally, phosphorylation on Ser-104 decreases vasorelaxant activity.

Its subcellular location is the secreted. It localises to the perikaryon. The protein resides in the cell projection. Its function is as follows. Hormone that plays a key role in mediating cardio-renal homeostasis, and is involved in vascular remodeling and regulating energy metabolism. Acts by specifically binding and stimulating NPR1 to produce cGMP, which in turn activates effector proteins, such as PRKG1, that drive various biological responses. Regulates vasodilation, natriuresis, diuresis and aldosterone synthesis and is therefore essential for regulating blood pressure, controlling the extracellular fluid volume and maintaining the fluid-electrolyte balance. Also involved in inhibiting cardiac remodeling and cardiac hypertrophy by inducing cardiomyocyte apoptosis and attenuating the growth of cardiomyocytes and fibroblasts. Plays a role in female pregnancy by promoting trophoblast invasion and spiral artery remodeling in uterus, and thus prevents pregnancy-induced hypertension. In adipose tissue, acts in various cGMP- and PKG-dependent pathways to regulate lipid metabolism and energy homeostasis. This includes up-regulating lipid metabolism and mitochondrial oxygen utilization by activating the AMP-activated protein kinase (AMPK), and increasing energy expenditure by acting via MAPK11 to promote the UCP1-dependent thermogenesis of brown adipose tissue. Binds the clearance receptor NPR3 which removes the hormone from circulation. Functionally, may have a role in cardio-renal homeostasis through regulation of natriuresis, diuresis, vasodilation, and inhibiting aldosterone synthesis. In vitro, promotes the production of cGMP and induces vasodilation. May promote natriuresis, at least in part, by enhancing prostaglandin E2 synthesis resulting in the inhibition of renal Na+-K+-ATPase. However reports on the involvement of this peptide in mammal blood volume and blood pressure homeostasis are conflicting; according to a report, in vivo it is not sufficient to activate cGMP and does not inhibit collecting duct transport nor effect diuresis and natriuresis. Appears to bind to specific receptors that are distinct from the receptors bound by atrial natriuretic peptide and vessel dilator. Possibly enhances protein excretion in urine by decreasing proximal tubular protein reabsorption. May have a role in cardio-renal homeostasis through regulation of natriuresis, diuresis, and vasodilation. In vitro, promotes the production of cGMP and induces vasodilation. May promote natriuresis, at least in part, by enhancing prostaglandin E2 synthesis resulting in the inhibition of renal Na+-K+-ATPase. However reports on the involvement of this peptide in mammal blood volume and blood pressure homeostasis are conflicting; according to a report it is not sufficient to activate cGMP and does not inhibit collecting duct transport nor effect diuresis and natriuresis. Appears to bind to specific receptors that are distinct from the receptors bound by the atrial natriuretic and long-acting natriuretic peptides. Possibly functions in protein excretion in urine by maintaining the integrity of the proximal tubules and enhancing protein excretion by decreasing proximal tubular protein reabsorption. In terms of biological role, may have a role in cardio-renal homeostasis through regulation of diuresis and inhibiting aldosterone synthesis. In vitro, promotes the production of cGMP and induces vasodilation. May promote natriuresis, at least in part, by enhancing prostaglandin E2 synthesis resulting in the inhibition of renal Na+-K+-ATPase. May have a role in potassium excretion but not sodium excretion (natriuresis). Possibly enhances protein excretion in urine by decreasing proximal tubular protein reabsorption. Its function is as follows. Hormone produced in the kidneys that appears to be important for maintaining cardio-renal homeostasis. Mediates vasodilation, natriuresis and diuresis primarily in the renal system, in order to maintain the extracellular fluid volume and control the fluid-electrolyte balance. Specifically binds and stimulates cGMP production by renal transmembrane receptors, likely NPR1. Urodilatin not ANP, may be the natriuretic peptide responsible for the regulation of sodium and water homeostasis in the kidney. Functionally, may have a role in cardio-renal homeostasis through regulation of natriuresis and vasodilation. In vivo promotes natriuresis and in vitro, vasodilates renal artery strips. May have a role in cardio-renal homeostasis through regulation of regulation of natriuresis and vasodilation. In vivo promotes natriuresis. In vitro, vasodilates intestinal smooth muscle but not smooth muscle strips. In terms of biological role, may have a role in cardio-renal homeostasis through regulation of natriuresis and vasodilation. In vivo promotes natriuresis. In vitro, selectively vasodilates intestinal and vascular smooth muscle strips. Its function is as follows. May have a role in cardio-renal homeostasis through regulation of natriuresis and vasodilation. In vivo promotes natriuresis. In vitro, selectively vasodilates intestinal smooth muscle but not vascular smooth muscle strips. In Cavia porcellus (Guinea pig), this protein is Natriuretic peptides A (NPPA).